Here is a 265-residue protein sequence, read N- to C-terminus: Arcelin-1 (265 aa).

Residues 1–21 form the signal peptide; sequence MASSNLLTLALFLVLLTHANS. Residues N33, N89, and N128 are each glycosylated (N-linked (GlcNAc...) asparagine). A disulfide bridge links C165 with C201.

It belongs to the leguminous lectin family. As to quaternary structure, homodimer.

Its function is as follows. Seed storage. This carbohydrate-binding lectin has toxic effects on an important bean bruchid pest, Z.subfasciatus. Antibiosis properties of legume lectins are proposed to be due to the lysis of epithelial cells of the intestine by binding to the carbohydrate moieties of these proteins. This chain is Arcelin-1 (ARC1), found in Phaseolus vulgaris (Kidney bean).